We begin with the raw amino-acid sequence, 309 residues long: Protein-L-isoaspartate O-methyltransferase (309 aa).

The disordered stretch occupies residues 1 to 46; the sequence is MSGERAKRFPLALEDLKRAPRKSDGRAGERHAAIAAPKAADKPAAV. Residues 14–32 are compositionally biased toward basic and acidic residues; sequence EDLKRAPRKSDGRAGERHA. The segment covering 33 to 46 has biased composition (low complexity); that stretch reads AIAAPKAADKPAAV. The active site involves S156.

This sequence belongs to the methyltransferase superfamily. L-isoaspartyl/D-aspartyl protein methyltransferase family.

The protein resides in the cytoplasm. It carries out the reaction [protein]-L-isoaspartate + S-adenosyl-L-methionine = [protein]-L-isoaspartate alpha-methyl ester + S-adenosyl-L-homocysteine. Catalyzes the methyl esterification of L-isoaspartyl residues in peptides and proteins that result from spontaneous decomposition of normal L-aspartyl and L-asparaginyl residues. It plays a role in the repair and/or degradation of damaged proteins. The chain is Protein-L-isoaspartate O-methyltransferase from Burkholderia vietnamiensis (strain G4 / LMG 22486) (Burkholderia cepacia (strain R1808)).